We begin with the raw amino-acid sequence, 180 residues long: Nucleoside-triphosphatase THEP1 (180 aa).

ATP contacts are provided by residues 8–15 and 100–107; these read GPVGSIKA and VIIIDELG.

Belongs to the THEP1 NTPase family.

It catalyses the reaction a ribonucleoside 5'-triphosphate + H2O = a ribonucleoside 5'-diphosphate + phosphate + H(+). Functionally, has nucleotide phosphatase activity towards ATP, GTP, CTP, TTP and UTP. May hydrolyze nucleoside diphosphates with lower efficiency. The protein is Nucleoside-triphosphatase THEP1 of Picrophilus torridus (strain ATCC 700027 / DSM 9790 / JCM 10055 / NBRC 100828 / KAW 2/3).